A 739-amino-acid polypeptide reads, in one-letter code: Probable beta-glucosidase L (739 aa).

Positions 1–17 (MQTLFLSLLAAAVTVHA) are cleaved as a signal peptide. Asn40 and Asn224 each carry an N-linked (GlcNAc...) asparagine glycan. Asp252 is an active-site residue. The N-linked (GlcNAc...) asparagine glycan is linked to Asn398.

The protein belongs to the glycosyl hydrolase 3 family.

It localises to the secreted. The enzyme catalyses Hydrolysis of terminal, non-reducing beta-D-glucosyl residues with release of beta-D-glucose.. The protein operates within glycan metabolism; cellulose degradation. Beta-glucosidases are one of a number of cellulolytic enzymes involved in the degradation of cellulosic biomass. Catalyzes the last step releasing glucose from the inhibitory cellobiose. This chain is Probable beta-glucosidase L (bglL), found in Aspergillus fumigatus (strain CBS 144.89 / FGSC A1163 / CEA10) (Neosartorya fumigata).